Consider the following 209-residue polypeptide: Guanylate kinase (209 aa).

Residues 9 to 188 (GIMLVISSPS…SVHQIKCIFT (180 aa)) enclose the Guanylate kinase-like domain. Residue 16 to 23 (SPSGGGKT) participates in ATP binding.

The protein belongs to the guanylate kinase family.

The protein resides in the cytoplasm. The catalysed reaction is GMP + ATP = GDP + ADP. Its function is as follows. Essential for recycling GMP and indirectly, cGMP. The sequence is that of Guanylate kinase from Ehrlichia canis (strain Jake).